Here is a 183-residue protein sequence, read N- to C-terminus: Ribonuclease H (183 aa).

The region spanning 2 to 151 is the RNase H type-1 domain; it reads SQARFIAFSD…VDQLAQAAAR (150 aa). Mg(2+)-binding residues include D11, E57, D79, and D143.

The protein belongs to the RNase H family. In terms of assembly, monomer. Mg(2+) serves as cofactor.

The protein localises to the cytoplasm. It catalyses the reaction Endonucleolytic cleavage to 5'-phosphomonoester.. Endonuclease that specifically degrades the RNA of RNA-DNA hybrids. This Anaeromyxobacter dehalogenans (strain 2CP-1 / ATCC BAA-258) protein is Ribonuclease H.